The primary structure comprises 312 residues: Taste receptor type 2 member 7 (312 aa).

At 1 to 9 (MTYETDTTL) the chain is on the extracellular side. The helical transmembrane segment at 10–30 (MLVAVGEALVGILGNAFIALV) threads the bilayer. Residues 31–49 (NFMGWMKNRKIASIDLILS) lie on the Cytoplasmic side of the membrane. Residues 50–70 (SVAMSRICLQCIILLDCIILV) traverse the membrane as a helical segment. The Extracellular segment spans residues 71-101 (QYPDTYNRGKEMRTVDFFWTLTNHLSVWFAT). The helical transmembrane segment at 102–122 (CLSIFYLFKIANFFHPLFLWI) threads the bilayer. The Cytoplasmic segment spans residues 123-128 (KWRIDK). A helical transmembrane segment spans residues 129 to 149 (LILRTLLACVIISLCFSLPVT). Residues 150–187 (ENLSDDFRRCVKTKERINSTLRCKVNKAGHASVKVNLN) lie on the Extracellular side of the membrane. Residues asparagine 151 and asparagine 167 are each glycosylated (N-linked (GlcNAc...) asparagine). Residues 188-208 (LVMLFPFSVSLVSFLLLILSL) form a helical membrane-spanning segment. The Cytoplasmic segment spans residues 209–235 (WRHTRQIQLSVTGYKDPSTTAHVKAMK). Residues 236–256 (AVISFLALFVVYCLAFLIATS) form a helical membrane-spanning segment. Topologically, residues 257 to 266 (SYFMPESELA) are extracellular. Residues 267 to 287 (VIWGELIALIYPSSHSFILIL) traverse the membrane as a helical segment. Over 288–312 (GSSKLKQASVRVLCRVKTMLKGKKY) the chain is Cytoplasmic.

The protein belongs to the G-protein coupled receptor T2R family. Expressed in subsets of taste receptor cells of the tongue and palate epithelium and exclusively in gustducin-positive cells. Expressed in 15% taste bud cells in circumvallate and foliate papillae but only in 2% in fungiform papillae. Expressed in gastric and duodenal tissues.

The protein resides in the membrane. Functionally, gustducin-coupled receptor implicated in the perception of bitter compounds in the oral cavity and the gastrointestinal tract. Signals through PLCB2 and the calcium-regulated cation channel TRPM5. This chain is Taste receptor type 2 member 7 (Tas2r7), found in Mus musculus (Mouse).